Consider the following 241-residue polypeptide: 1-Cys peroxiredoxin (241 aa).

Positions 33–189 (LRIGDVVPDF…IIRILDSFQL (157 aa)) constitute a Thioredoxin domain. C75 serves as the catalytic Cysteine sulfenic acid (-SOH) intermediate.

Belongs to the peroxiredoxin family. Prx6 subfamily. In terms of assembly, homodimer.

It catalyses the reaction a hydroperoxide + [thioredoxin]-dithiol = an alcohol + [thioredoxin]-disulfide + H2O. Thiol-specific peroxidase that catalyzes the reduction of hydrogen peroxide and organic hydroperoxides to water and alcohols, respectively. Plays a role in cell protection against oxidative stress by detoxifying peroxides. In Dictyostelium discoideum (Social amoeba), this protein is 1-Cys peroxiredoxin.